Consider the following 432-residue polypeptide: ATP-dependent RNA helicase RhlB (432 aa).

The Q motif signature appears at 9 to 37 (KKFSDFALHPKVIEALEKKGFSNCTQIQA). One can recognise a Helicase ATP-binding domain in the interval 40–219 (LPITVKGHDI…FEQMNNPEYV (180 aa)). An ATP-binding site is contributed by 53–60 (AQTGTGKT). The DEAD box motif lies at 165–168 (DEAD). Positions 245 to 390 (RLLQTLIEEE…VSKYNSDALL (146 aa)) constitute a Helicase C-terminal domain. A disordered region spans residues 393-432 (LPEPKRRHRPRQGQPRRNNSAPRRGNNTQRNNRNKRPSHS). Positions 404 to 423 (QGQPRRNNSAPRRGNNTQRN) are enriched in low complexity.

The protein belongs to the DEAD box helicase family. RhlB subfamily. As to quaternary structure, component of the RNA degradosome, which is a multiprotein complex involved in RNA processing and mRNA degradation.

The protein resides in the cytoplasm. The catalysed reaction is ATP + H2O = ADP + phosphate + H(+). Its function is as follows. DEAD-box RNA helicase involved in RNA degradation. Has RNA-dependent ATPase activity and unwinds double-stranded RNA. The sequence is that of ATP-dependent RNA helicase RhlB from Proteus mirabilis (strain HI4320).